Reading from the N-terminus, the 247-residue chain is Protein At-4/1 (247 aa).

2 coiled-coil regions span residues 39-126 (VESS…YKIR) and 182-247 (LLME…LSSS).

Interacts with viral tomato spotted wilt virus (TSWV) movement protein NSM, which is involved in cell-to cell spread of viral genome and enlargement of the host plasmodesmata size exclusion limit (SEL). As to expression, expressed in leaves (at protein level).

It localises to the endoplasmic reticulum. Its subcellular location is the cell junction. The protein resides in the plasmodesma. In terms of biological role, involved in intra- and inter-cellular trafficking through plasmodesmata (PD). This is Protein At-4/1 from Arabidopsis thaliana (Mouse-ear cress).